The sequence spans 485 residues: D-alanine--D-alanyl carrier protein ligase (485 aa).

144 to 145 (TS) serves as a coordination point for ATP. D189 contributes to the D-alanine binding site. Residue 284-289 (NTYGPT) participates in ATP binding. D-alanine is bound at residue V293. The ATP site is built by D365 and K473. D-alanine is bound at residue K473.

The protein belongs to the ATP-dependent AMP-binding enzyme family. DltA subfamily.

The protein resides in the cytoplasm. It catalyses the reaction holo-[D-alanyl-carrier protein] + D-alanine + ATP = D-alanyl-[D-alanyl-carrier protein] + AMP + diphosphate. The protein operates within cell wall biogenesis; lipoteichoic acid biosynthesis. Its function is as follows. Catalyzes the first step in the D-alanylation of lipoteichoic acid (LTA), the activation of D-alanine and its transfer onto the D-alanyl carrier protein (Dcp) DltC. In an ATP-dependent two-step reaction, forms a high energy D-alanyl-AMP intermediate, followed by transfer of the D-alanyl residue as a thiol ester to the phosphopantheinyl prosthetic group of the Dcp. D-alanylation of LTA plays an important role in modulating the properties of the cell wall in Gram-positive bacteria, influencing the net charge of the cell wall. This is D-alanine--D-alanyl carrier protein ligase from Staphylococcus aureus (strain bovine RF122 / ET3-1).